Reading from the N-terminus, the 376-residue chain is WW domain-binding protein 4 (376 aa).

A Matrin-type zinc finger spans residues 11-42 (KFCDYCKCWIADNRPSVEFHERGKNHKENVAR). The segment covering 94 to 111 (PTVSPVISTVQPTPTSNQ) has biased composition (polar residues). 2 disordered regions span residues 94-127 (PTVS…ASKG) and 192-324 (WEKP…ECLS). A compositionally biased stretch (basic residues) spans 114 to 123 (EKKKKKKKKE). WW domains lie at 123 to 156 (EASK…KPEG) and 164 to 197 (TAAK…KPED). Over residues 219 to 272 (EDAKSSDSHSDSEGEQKKAGEASTETKKLIIKFKEKNKSTEKRIGPEIQKEKST) the composition is skewed to basic and acidic residues. Phosphoserine occurs at positions 228 and 230. The segment at 357–375 (KKRRLENGKSRNLRQRGDD) is interaction with SNRNP200.

As to quaternary structure, component of the spliceosome B complex. Associated with U2 snRNPs. Binds splicing factors SNRPB, SNRPC and SF1. Interacts via the WW domains with the Pro-rich domains of KHDRBS1/SAM68. Interacts via the WW domains with the Pro-rich domains of WBP11. Interacts with SNRNP200.

The protein localises to the nucleus. Its subcellular location is the nucleus speckle. Involved in pre-mRNA splicing as a component of the spliceosome. May play a role in cross-intron bridging of U1 and U2 snRNPs in the mammalian A complex. The chain is WW domain-binding protein 4 (Wbp4) from Mus musculus (Mouse).